The primary structure comprises 333 residues: NADH-quinone oxidoreductase subunit H (333 aa).

Transmembrane regions (helical) follow at residues 15-35 (FFIFFGLAVLLLFAVLGFVTY), 88-108 (FILAPVIAFAPAFMVLAVIPF), 117-137 (IGVGLLYYIAVSGITTIGVVT), 159-179 (ISYEIPLVMSVIGVVLLAGSL), 191-211 (VWYIFAQPIGFVIFLIAAVAE), 239-259 (WAFFMLSEYVYFFGMSSLITV), 272-294 (GFIPGAVWFALKFSSVVFLLIWF), and 313-333 (ILLPIALANIFLTALIKELFF).

This sequence belongs to the complex I subunit 1 family. As to quaternary structure, NDH-1 is composed of 14 different subunits. Subunits NuoA, H, J, K, L, M, N constitute the membrane sector of the complex.

It is found in the cell membrane. It carries out the reaction a quinone + NADH + 5 H(+)(in) = a quinol + NAD(+) + 4 H(+)(out). In terms of biological role, NDH-1 shuttles electrons from NADH, via FMN and iron-sulfur (Fe-S) centers, to quinones in the respiratory chain. The immediate electron acceptor for the enzyme in this species is believed to be ubiquinone. Couples the redox reaction to proton translocation (for every two electrons transferred, four hydrogen ions are translocated across the cytoplasmic membrane), and thus conserves the redox energy in a proton gradient. This subunit may bind ubiquinone. In Bacillus mycoides (strain KBAB4) (Bacillus weihenstephanensis), this protein is NADH-quinone oxidoreductase subunit H.